The chain runs to 136 residues: Translation initiation factor 5A (136 aa).

The residue at position 38 (Lys-38) is a Hypusine.

Belongs to the eIF-5A family.

The protein resides in the cytoplasm. Functions by promoting the formation of the first peptide bond. In Methanopyrus kandleri (strain AV19 / DSM 6324 / JCM 9639 / NBRC 100938), this protein is Translation initiation factor 5A.